Consider the following 704-residue polypeptide: Phosphoribosylformylglycinamidine synthase subunit PurL (704 aa).

H32 is an active-site residue. Y35 lines the ATP pocket. Position 76 (E76) interacts with Mg(2+). Substrate-binding positions include S77–H80 and R99. H78 functions as the Proton acceptor in the catalytic mechanism. Position 100 (D100) interacts with Mg(2+). Q224 contacts substrate. A Mg(2+)-binding site is contributed by D252. E296–Q298 contacts substrate. The ATP site is built by D471 and G508. Position 509 (N509) interacts with Mg(2+). Residue S511 coordinates substrate.

It belongs to the FGAMS family. Monomer. Part of the FGAM synthase complex composed of 1 PurL, 1 PurQ and 2 PurS subunits.

Its subcellular location is the cytoplasm. The enzyme catalyses N(2)-formyl-N(1)-(5-phospho-beta-D-ribosyl)glycinamide + L-glutamine + ATP + H2O = 2-formamido-N(1)-(5-O-phospho-beta-D-ribosyl)acetamidine + L-glutamate + ADP + phosphate + H(+). It functions in the pathway purine metabolism; IMP biosynthesis via de novo pathway; 5-amino-1-(5-phospho-D-ribosyl)imidazole from N(2)-formyl-N(1)-(5-phospho-D-ribosyl)glycinamide: step 1/2. Functionally, part of the phosphoribosylformylglycinamidine synthase complex involved in the purines biosynthetic pathway. Catalyzes the ATP-dependent conversion of formylglycinamide ribonucleotide (FGAR) and glutamine to yield formylglycinamidine ribonucleotide (FGAM) and glutamate. The FGAM synthase complex is composed of three subunits. PurQ produces an ammonia molecule by converting glutamine to glutamate. PurL transfers the ammonia molecule to FGAR to form FGAM in an ATP-dependent manner. PurS interacts with PurQ and PurL and is thought to assist in the transfer of the ammonia molecule from PurQ to PurL. This is Phosphoribosylformylglycinamidine synthase subunit PurL from Pyrococcus furiosus (strain ATCC 43587 / DSM 3638 / JCM 8422 / Vc1).